A 247-amino-acid chain; its full sequence is MENFSLLSISGTRISSSALSTLPDIMSSRATSLPDIAKPVLPTEVPSPVQALPPQCPGGVLRHGVHNIVISPDCILGDAPNGEQLRWNCTIYRPWFSPYSYFLCKDKESHLETYSFSEVQRDEGQRDSCLPEDTADSVCSSSPSPENTCPREATKKSRPGPDTTDSITFQDILMASKWHPAQQNGYKCASCCRLYPTLHSLKSHIKRGFKEGFSCKVYYHKLKTLWYKEQKARPGDRLSLGSGQAFR.

The tract at residues 125–164 (QRDSCLPEDTADSVCSSSPSPENTCPREATKKSRPGPDTT) is disordered. The segment covering 137-147 (SVCSSSPSPEN) has biased composition (polar residues).

It is found in the nucleus membrane. In terms of biological role, plays a role in spermiogenesis and fertilization. The sequence is that of Spermatogenesis-associated protein 46 (SPATA46) from Bos taurus (Bovine).